We begin with the raw amino-acid sequence, 291 residues long: 4-diphosphocytidyl-2-C-methyl-D-erythritol kinase (291 aa).

Residue lysine 11 is part of the active site. Residue 95-105 participates in ATP binding; sequence PVAAGMAGGSS. The active site involves aspartate 137.

This sequence belongs to the GHMP kinase family. IspE subfamily.

The enzyme catalyses 4-CDP-2-C-methyl-D-erythritol + ATP = 4-CDP-2-C-methyl-D-erythritol 2-phosphate + ADP + H(+). Its pathway is isoprenoid biosynthesis; isopentenyl diphosphate biosynthesis via DXP pathway; isopentenyl diphosphate from 1-deoxy-D-xylulose 5-phosphate: step 3/6. Its function is as follows. Catalyzes the phosphorylation of the position 2 hydroxy group of 4-diphosphocytidyl-2C-methyl-D-erythritol. In Lachnoclostridium phytofermentans (strain ATCC 700394 / DSM 18823 / ISDg) (Clostridium phytofermentans), this protein is 4-diphosphocytidyl-2-C-methyl-D-erythritol kinase.